The sequence spans 275 residues: Fos-related antigen 1 (275 aa).

Disordered regions lie at residues 1–33 (MYRD…QTVQ) and 71–115 (TYPQ…VRRE). Over residues 7–33 (EPGPSSGAGSAYGRPAQPQQAQTQTVQ) the composition is skewed to low complexity. The region spanning 107-170 (EERRRVRRER…ERLELVLEAH (64 aa)) is the bZIP domain. The basic motif stretch occupies residues 109 to 129 (RRRVRRERNKLAAAKCRNRRK). Positions 135–163 (LQAETDKLEDEKSGLQREIEELQKQKERL) are leucine-zipper. Basic and acidic residues predominate over residues 171–184 (RPICKIPEEDKKDT). Residues 171-275 (RPICKIPEED…PLGSPTLLAL (105 aa)) form a disordered region. Composition is skewed to low complexity over residues 185–194 (GGTSSTSGAG), 219–237 (LHTP…TPSL), and 256–275 (SSSS…LLAL). Ser269 is subject to Phosphoserine.

The protein belongs to the bZIP family. Fos subfamily. As to quaternary structure, heterodimer. Interacts with the BAF multiprotein chromatin-remodeling complex subunits SMARCB1 and SMARCD1. Interacts with ARID1A and JUN.

The protein localises to the nucleus. This Rattus norvegicus (Rat) protein is Fos-related antigen 1 (Fosl1).